A 155-amino-acid polypeptide reads, in one-letter code: Acyl-CoA-binding domain-containing protein 3 (155 aa).

The ACB domain maps to 3 to 88; the sequence is LQEDFEEYAE…VKQLQEEAAA (86 aa). Residues lysine 15, 30–34, lysine 56, and tyrosine 75 contribute to the an acyl-CoA site; that span reads YGLYK.

This sequence belongs to the ACBP family. In terms of tissue distribution, highly expressed in leaves. Expressed at low levels in roots and seeds.

It localises to the cytoplasm. Its subcellular location is the cytosol. Functionally, binds medium- and long-chain acyl-CoA esters with high affinity. Can interact in vitro with linolenoyl-CoA. Binds phosphatidic acid (PA) and phosphatidylcholine (PC) in vitro. May play a role in the biosynthesis of phospholipids. In Oryza sativa subsp. japonica (Rice), this protein is Acyl-CoA-binding domain-containing protein 3.